Reading from the N-terminus, the 292-residue chain is MPWLQIRLAITPDQAGALEDRLLELGAVSVTFMDAEDQPIFEPDLGTTPLWSHTHLLALFEADTDADALLAHLRLLRGGELPEHQVERIKDQDWERSWMDNFQPMRFGRRLWIVPSWHQAPEPGAVNLLLDPGLAFGTGTHPTTALCLEWLDGQELAGRSLLDFGCGSGILAIAALLLGAERAVGTDIDPQALQASRDNALRNGIDPARFPLHLPADLPRQPADVVVANILAGPLVQLAPQLASLVRPGGRLALSGILAEQAGEVRAAYEGAFVLAPTTEKDGWVRIDGVRR.

S-adenosyl-L-methionine contacts are provided by Thr144, Gly165, Asp187, and Asn229.

It belongs to the methyltransferase superfamily. PrmA family.

It is found in the cytoplasm. It carries out the reaction L-lysyl-[protein] + 3 S-adenosyl-L-methionine = N(6),N(6),N(6)-trimethyl-L-lysyl-[protein] + 3 S-adenosyl-L-homocysteine + 3 H(+). Functionally, methylates ribosomal protein L11. The protein is Ribosomal protein L11 methyltransferase of Azotobacter vinelandii (strain DJ / ATCC BAA-1303).